The following is a 439-amino-acid chain: Glutamyl-tRNA reductase (439 aa).

Substrate-binding positions include 46 to 49 (TCNR), serine 111, 116 to 118 (EGE), and glutamine 122. Cysteine 47 serves as the catalytic Nucleophile. 191–196 (GTGAYA) provides a ligand contact to NADP(+).

Belongs to the glutamyl-tRNA reductase family. Homodimer.

The catalysed reaction is (S)-4-amino-5-oxopentanoate + tRNA(Glu) + NADP(+) = L-glutamyl-tRNA(Glu) + NADPH + H(+). It participates in porphyrin-containing compound metabolism; protoporphyrin-IX biosynthesis; 5-aminolevulinate from L-glutamyl-tRNA(Glu): step 1/2. Functionally, catalyzes the NADPH-dependent reduction of glutamyl-tRNA(Glu) to glutamate 1-semialdehyde (GSA). The sequence is that of Glutamyl-tRNA reductase from Clavibacter michiganensis subsp. michiganensis (strain NCPPB 382).